The primary structure comprises 353 residues: tRNA N6-adenosine threonylcarbamoyltransferase (353 aa).

Histidine 115 and histidine 119 together coordinate Fe cation. Substrate-binding positions include 138–142 (LVSGG), aspartate 171, glycine 184, and asparagine 276. Aspartate 304 provides a ligand contact to Fe cation.

The protein belongs to the KAE1 / TsaD family. It depends on Fe(2+) as a cofactor.

The protein resides in the cytoplasm. The enzyme catalyses L-threonylcarbamoyladenylate + adenosine(37) in tRNA = N(6)-L-threonylcarbamoyladenosine(37) in tRNA + AMP + H(+). Functionally, required for the formation of a threonylcarbamoyl group on adenosine at position 37 (t(6)A37) in tRNAs that read codons beginning with adenine. Is involved in the transfer of the threonylcarbamoyl moiety of threonylcarbamoyl-AMP (TC-AMP) to the N6 group of A37, together with TsaE and TsaB. TsaD likely plays a direct catalytic role in this reaction. The polypeptide is tRNA N6-adenosine threonylcarbamoyltransferase (Xanthomonas euvesicatoria pv. vesicatoria (strain 85-10) (Xanthomonas campestris pv. vesicatoria)).